Here is a 503-residue protein sequence, read N- to C-terminus: Transforming protein rel polyprotein (503 aa).

Residues 16-305 (PYIEIFEQPR…GNKAKRQRST (290 aa)) enclose the RHD domain. Phosphoserine; by host PKA is present on Ser275. 2 disordered regions span residues 286–306 (RYLP…RSTL) and 318–342 (AVTE…KEPN). The short motif at 298 to 303 (KAKRQR) is the Nuclear localization signal element.

Its subcellular location is the host cytoplasm. Its function is as follows. This transforming protein appears to have a protein-kinase activity. The sequence is that of Transforming protein rel polyprotein (V-REL) from Galliformes.